Reading from the N-terminus, the 471-residue chain is Cytolysin (471 aa).

The N-terminal stretch at 1-20 is a signal peptide; the sequence is MKKMTLFTLSLLATAVQVGA. The region spanning 338 to 465 is the Ricin B-type lectin domain; it reads AHVTLQSLSN…EANQARWKPT (128 aa).

Belongs to the HlyA hemolysin family.

Its function is as follows. Bacterial hemolysins are exotoxins that attack blood cell membranes and cause cell rupture by mechanisms not clearly defined. This chain is Cytolysin (vvhA), found in Vibrio vulnificus (strain CMCP6).